A 357-amino-acid chain; its full sequence is Heat-inducible transcription repressor HrcA (357 aa).

The protein belongs to the HrcA family.

In terms of biological role, negative regulator of class I heat shock genes (grpE-dnaK-dnaJ and groELS operons). Prevents heat-shock induction of these operons. The sequence is that of Heat-inducible transcription repressor HrcA from Ureaplasma parvum serovar 3 (strain ATCC 27815 / 27 / NCTC 11736).